Here is a 414-residue protein sequence, read N- to C-terminus: Methyltransferase-like protein 2 (414 aa).

The tract at residues 56-77 is disordered; that stretch reads LNQHSSESNPKKRKRKQKNSSF.

This sequence belongs to the MT-A70-like family.

Probable methyltransferase. The sequence is that of Methyltransferase-like protein 2 from Arabidopsis thaliana (Mouse-ear cress).